The chain runs to 879 residues: Bifunctional uridylyltransferase/uridylyl-removing enzyme (879 aa).

A uridylyltransferase region spans residues methionine 1 to histidine 340. Residues isoleucine 341–threonine 700 form a uridylyl-removing region. The HD domain maps to valine 458 to leucine 580. ACT domains follow at residues glutamate 701 to arginine 782 and threonine 809 to phenylalanine 879.

This sequence belongs to the GlnD family. Requires Mg(2+) as cofactor.

It carries out the reaction [protein-PII]-L-tyrosine + UTP = [protein-PII]-uridylyl-L-tyrosine + diphosphate. It catalyses the reaction [protein-PII]-uridylyl-L-tyrosine + H2O = [protein-PII]-L-tyrosine + UMP + H(+). Uridylyltransferase (UTase) activity is inhibited by glutamine, while glutamine activates uridylyl-removing (UR) activity. In terms of biological role, modifies, by uridylylation and deuridylylation, the PII regulatory proteins (GlnB and homologs), in response to the nitrogen status of the cell that GlnD senses through the glutamine level. Under low glutamine levels, catalyzes the conversion of the PII proteins and UTP to PII-UMP and PPi, while under higher glutamine levels, GlnD hydrolyzes PII-UMP to PII and UMP (deuridylylation). Thus, controls uridylylation state and activity of the PII proteins, and plays an important role in the regulation of nitrogen assimilation and metabolism. The sequence is that of Bifunctional uridylyltransferase/uridylyl-removing enzyme from Idiomarina loihiensis (strain ATCC BAA-735 / DSM 15497 / L2-TR).